An 808-amino-acid chain; its full sequence is Probable phosphoketolase 1 (808 aa).

Belongs to the XFP family. It depends on thiamine diphosphate as a cofactor.

This Nostoc sp. (strain PCC 7120 / SAG 25.82 / UTEX 2576) protein is Probable phosphoketolase 1.